The following is a 308-amino-acid chain: MSLTAGLTDARPDTVETATVAVIGTGAIGRDLVSKIDRSPGLDCRLVAGRNPESAGLRYAESLGCATTAAGIDAVLAASPFDVVFDATSAASHRDHWPLLEPLGTLVIDLTPSKVGQMVAPTVTGVAAEDARNVNLISCGGQASVPVVHALAARFPVTYLEVVSTVASDVAGRATRLNLDEYVTATGHAVTTFSGVSDVKIILNISPAVPPATFRTVIHARVPDADAAAVRAVVDRAAEQVRSFAPGYEVVACTAADDLVTIVLKVTACSDVLPPYAGNLDIINAAAVLVAEQYAARPGRVSRTGVSS.

25–28 contributes to the NAD(+) binding site; sequence TGAI. C139 functions as the Acyl-thioester intermediate in the catalytic mechanism. N279 is an NAD(+) binding site.

It belongs to the acetaldehyde dehydrogenase family.

The enzyme catalyses acetaldehyde + NAD(+) + CoA = acetyl-CoA + NADH + H(+). This is Acetaldehyde dehydrogenase from Streptomyces griseus subsp. griseus (strain JCM 4626 / CBS 651.72 / NBRC 13350 / KCC S-0626 / ISP 5235).